The following is a 321-amino-acid chain: Glucokinase (321 aa).

Position 8 to 13 (8 to 13) interacts with ATP; it reads GDVGGT.

This sequence belongs to the bacterial glucokinase family.

The protein resides in the cytoplasm. It catalyses the reaction D-glucose + ATP = D-glucose 6-phosphate + ADP + H(+). The protein is Glucokinase of Shigella flexneri serotype 5b (strain 8401).